The sequence spans 593 residues: Kelch-like protein 2 (593 aa).

Positions 1 to 28 (METPPLPPACTKQGHQKPLDSKDDNTEK) are disordered. Residues 17-28 (KPLDSKDDNTEK) show a composition bias toward basic and acidic residues. The BTB domain maps to 56–123 (CDVTIVAEDM…VYTAEIQVTE (68 aa)). Kelch repeat units lie at residues 308 to 353 (LMVV…YMAG), 354 to 400 (LVFA…VLNG), 402 to 447 (LYAV…VVGG), 449 to 496 (LYAV…VLNN), 497 to 543 (LLYA…AVNG), and 545 to 591 (LYVV…VIDK).

In terms of assembly, component of the BCR(KLHL2) E3 ubiquitin ligase complex, at least composed of CUL3 and KLHL2 and RBX1. Binds actin. Interacts with KLHL12. Interacts (via N-terminus) with FYN (via SH3 domain). In terms of tissue distribution, ubiquitous. Detected throughout the brain.

The protein localises to the cytoplasm. It localises to the cytoskeleton. The protein resides in the cell projection. Its subcellular location is the ruffle. It is found in the lamellipodium. The protein localises to the cytosol. The protein operates within protein modification; protein ubiquitination. Substrate-specific adapter of a BCR (BTB-CUL3-RBX1) E3 ubiquitin ligase complex that mediates the ubiquitination of target proteins, such as NPTXR, WNK1, WNK3 and WNK4, leading most often to their proteasomal degradation. The BCR(KLHL2) complex catalyzes ubiquitination and degradation of NPTXR. Responsible for degradative ubiquitination of the WNK kinases WNK1, WNK3 and WNK4. Plays a role in the reorganization of the actin cytoskeleton. Promotes growth of cell projections in oligodendrocyte precursors. The chain is Kelch-like protein 2 from Homo sapiens (Human).